Consider the following 152-residue polypeptide: Pseudo histidine-containing phosphotransfer protein 5 (152 aa).

The HPt domain maps to 38–140 (NPNFAEEVVS…ESYFQLLRQA (103 aa)).

Functionally, functions as a two-component phosphorelay mediator between cytokinin sensor histidine kinases and response regulators (B-type ARRs). Plays an important role in propagating cytokinin signal transduction. The chain is Pseudo histidine-containing phosphotransfer protein 5 from Oryza sativa subsp. japonica (Rice).